Consider the following 320-residue polypeptide: Polyprenal reductase 1 (320 aa).

6 helical membrane-spanning segments follow: residues 5-25, 64-84, 143-163, 200-220, 243-263, and 266-286; these read IVWLVKAAWITVWIVSILPLV, FFGHFYVVGVVWTTLLLAATW, MHILAYVGALFYYVAAPLSLC, PLMKLGSLQWIGGAIFLWGWI, IIPYGDWFEMVSCPHFLAEIV, and LGLLISSGGTDISIWLLFGFV.

It belongs to the steroid 5-alpha reductase family. Polyprenal reductase subfamily. Expressed in roots and flowers.

The protein localises to the cell membrane. It catalyses the reaction a di-trans,poly-cis-dolichal + NADP(+) = a di-trans,poly-cis-polyprenal + NADPH + H(+). The protein operates within protein modification; protein glycosylation. Plays a key role in early steps of protein N-linked glycosylation by being involved in the conversion of polyprenol into dolichol. Acts as a polyprenal reductase that mediates the reduction of polyprenal into dolichal in a NADP-dependent mechanism. Dolichols are required for the synthesis of dolichol-linked monosaccharides and the oligosaccharide precursor used for N-glycosylation. Involved in the regulation of plant growth and reproductive processes. This Arabidopsis thaliana (Mouse-ear cress) protein is Polyprenal reductase 1.